Here is a 928-residue protein sequence, read N- to C-terminus: MAWLRLQPLTSAFLHFGLVTFVLFLNCLRAEAGDSGDVPSAGQNNESCSGSSDCKEGVILPIWYPENPSLGDKIARVIVYFVALIYMFLGVSIIADRFMASIEVITSQEREVTIKKPNGETSTTTIRVWNETVSNLTLMALGSSAPEILLSLIEVCGHGFIAGDLGPSTIVGSAAFNMFIIIGICVYVIPDGETRKIKHLRVFFVTAAWSIFAYIWLYMILAVFSPGVVQVWEGLLTLFFFPVCVLLAWVADKRLLFYKYMHKKYRTDKHRGIIIETEGDHPKGIEMDGKMMNSHFLDGNFTPLEGKEVDESRREMIRILKDLKQKHPEKDLDQLVEMANYYALSHQQKSRAFYRIQATRMMTGAGNILKKHAAEQAKKTSSMSEVHTDEPEDFASKVFFDPCSYQCLENCGAVLLTVVRKGGDISKTMYVDYKTEDGSANAGADYEFTEGTVVLKPGETQKEFSVGIIDDDIFEEDEHFFVRLSNVRVEEEQLAEGMLPAILNSLPLPRAVLASPCVATVTILDDDHAGIFTFECDTIHVSESIGVMEVKVLRTSGARGTVIVPFRTVEGTAKGGGEDFEDAYGELEFKNDETVKTIHIKVIDDKAYEKNKNYVIEMMGPRMVDMSVQKALLLSPEVTDRKLTVEEEEAKRIAEMGKPVLGEHPKLEVIIEESYEFKSTVDKLIKKTNLALVVGTHSWRDQFMEAITVSAGGDEDEDESGEERLPSCFDYVMHFLTVFWKVLFACVPPTEYCHGWACFVVSILIIGMLTAIIGDLASHFGCTIGLKDSVTAVVFVAFGTSVPDTFASKAAALQDVYADASIGNVTGSNAVNVFLGIGLAWSVAAIYWAMQGQEFHVSAGTLAFSVTLFTIFAFVCLSVLLYRRRPHLGGELGGPRGCKLATTWLFVSLWLLYILFATLEAYCYIKGF.

The signal sequence occupies residues 1-30 (MAWLRLQPLTSAFLHFGLVTFVLFLNCLRA). The Extracellular segment spans residues 31-73 (EAGDSGDVPSAGQNNESCSGSSDCKEGVILPIWYPENPSLGDK). A glycan (N-linked (GlcNAc...) asparagine) is linked at Asn45. The helical transmembrane segment at 74–94 (IARVIVYFVALIYMFLGVSII) threads the bilayer. At 95–147 (ADRFMASIEVITSQEREVTIKKPNGETSTTTIRVWNETVSNLTLMALGSSAPE) the chain is on the cytoplasmic side. The helical transmembrane segment at 148–168 (ILLSLIEVCGHGFIAGDLGPS) threads the bilayer. A topological domain (extracellular) is located at residue Thr169. The chain crosses the membrane as a helical span at residues 170–190 (IVGSAAFNMFIIIGICVYVIP). The Cytoplasmic portion of the chain corresponds to 191-201 (DGETRKIKHLR). Residues 202–222 (VFFVTAAWSIFAYIWLYMILA) traverse the membrane as a helical segment. The Extracellular portion of the chain corresponds to 223–230 (VFSPGVVQ). Residues 231–251 (VWEGLLTLFFFPVCVLLAWVA) form a helical membrane-spanning segment. The Cytoplasmic segment spans residues 252–727 (DKRLLFYKYM…DESGEERLPS (476 aa)). Positions 253-272 (KRLLFYKYMHKKYRTDKHRG) are putative calmodulin-binding region. 2 consecutive Calx-beta domains span residues 390–485 (EPED…VRLS) and 519–618 (ATVT…VIEM). The Ca(2+) site is built by Glu409, Asp445, Asp470, Asp471, Ile473, Glu475, Glu478, Asp525, Asp526, Asp527, Glu543, Asp579, Asp605, and Glu673. A helical transmembrane segment spans residues 728–748 (CFDYVMHFLTVFWKVLFACVP). The Extracellular portion of the chain corresponds to 749-755 (PTEYCHG). The helical transmembrane segment at 756–776 (WACFVVSILIIGMLTAIIGDL) threads the bilayer. Topologically, residues 777-779 (ASH) are cytoplasmic. The chain crosses the membrane as a helical span at residues 780 to 800 (FGCTIGLKDSVTAVVFVAFGT). At 801-829 (SVPDTFASKAAALQDVYADASIGNVTGSN) the chain is on the extracellular side. The N-linked (GlcNAc...) asparagine glycan is linked to Asn824. The chain crosses the membrane as a helical span at residues 830 to 850 (AVNVFLGIGLAWSVAAIYWAM). Over 851 to 861 (QGQEFHVSAGT) the chain is Cytoplasmic. A helical membrane pass occupies residues 862–882 (LAFSVTLFTIFAFVCLSVLLY). The Extracellular portion of the chain corresponds to 883–904 (RRRPHLGGELGGPRGCKLATTW). A helical transmembrane segment spans residues 905 to 925 (LFVSLWLLYILFATLEAYCYI). Topologically, residues 926 to 928 (KGF) are cytoplasmic.

It belongs to the Ca(2+):cation antiporter (CaCA) (TC 2.A.19) family. SLC8 subfamily. In terms of assembly, interacts with AKAP1. As to expression, detected in gray and white matter in the spinal cord. Detected in hippocampus neurons. Detected in brain cortex neurons. Detected in skeletal muscle (at protein level). Isoform 1 and isoform 2 are highly expressed in brain; levels are higher for isoform 2. Isoform 1 and isoform 2 are detected in soleus muscle; levels are higher for isoform 1. Detected in gastrocnemius muscle.

Its subcellular location is the cell membrane. It is found in the perikaryon. The protein resides in the cell projection. The protein localises to the dendrite. It localises to the dendritic spine. Its subcellular location is the sarcolemma. It is found in the cytoplasm. The protein resides in the sarcoplasm. The protein localises to the cell junction. It localises to the mitochondrion outer membrane. Its subcellular location is the perinuclear region. It is found in the endoplasmic reticulum membrane. It carries out the reaction Ca(2+)(in) + 3 Na(+)(out) = Ca(2+)(out) + 3 Na(+)(in). Calcium transport is stimulated by cytoplasmic Ca(2+) and is inhibited by Na(+). Isoform 1 is more sensitive to stimulation by Ca(2+) than isoform 2. Isoform 2 is more sensitive to inactivation by Na(+). Mediates the electrogenic exchange of Ca(2+) against Na(+) ions across the cell membrane, and thereby contributes to the regulation of cytoplasmic Ca(2+) levels and Ca(2+)-dependent cellular processes. Contributes to cellular Ca(2+) homeostasis in excitable cells, both in muscle and in brain. In a first phase, voltage-gated channels mediate the rapid increase of cytoplasmic Ca(2+) levels due to release of Ca(2+) stores from the endoplasmic reticulum. SLC8A3 mediates the export of Ca(2+) from the cell during the next phase, so that cytoplasmic Ca(2+) levels rapidly return to baseline. Contributes to Ca(2+) transport during excitation-contraction coupling in muscle. In neurons, contributes to the rapid decrease of cytoplasmic Ca(2+) levels back to baseline after neuronal activation, and thereby contributes to modulate synaptic plasticity, learning and memory. Required for normal oligodendrocyte differentiation and for normal myelination. Mediates Ca(2+) efflux from mitochondria and contributes to mitochondrial Ca(2+) ion homeostasis. Isoform 1 displays higher calcium exchanger activity than isoform 2, probably because isoform 1 has a lower threshold for activation by cytoplasmic Ca(2+). The chain is Sodium/calcium exchanger 3 from Mus musculus (Mouse).